We begin with the raw amino-acid sequence, 189 residues long: Interferon alpha-17 (189 aa).

Residues 1–23 (MALSFSLLMAVLVLSYKSICSLG) form the signal peptide. Intrachain disulfides connect C24–C122 and C52–C162.

This sequence belongs to the alpha/beta interferon family.

It localises to the secreted. Produced by macrophages, IFN-alpha have antiviral activities. Interferon stimulates the production of two enzymes: a protein kinase and an oligoadenylate synthetase. This is Interferon alpha-17 (IFNA17) from Homo sapiens (Human).